We begin with the raw amino-acid sequence, 537 residues long: Tyrosine-protein kinase Fyn (537 aa).

Gly2 is lipidated: N-myristoyl glycine. Residues Cys3 and Cys6 are each lipidated (S-palmitoyl cysteine). Thr12 carries the phosphothreonine; by PKC modification. The SH3 domain maps to 82–143 (TGVTLFVALY…PSNYVAPVDS (62 aa)). Residues 149 to 246 (WYFGKLGRKD…GLCCRLVVPC (98 aa)) enclose the SH2 domain. A Protein kinase domain is found at 271–524 (LQLIKRLGNG…YLQGFLEDYF (254 aa)). ATP contacts are provided by residues 277 to 285 (LGNGQFGEV) and Lys299. Residue Asp390 is the Proton acceptor of the active site. Position 420 is a phosphotyrosine; by autocatalysis (Tyr420). Tyr531 is modified (phosphotyrosine).

It belongs to the protein kinase superfamily. Tyr protein kinase family. SRC subfamily. Associates through its SH3 domain, to the p85 subunit of phosphatidylinositol 3-kinase. Requires Mn(2+) as cofactor.

It catalyses the reaction L-tyrosyl-[protein] + ATP = O-phospho-L-tyrosyl-[protein] + ADP + H(+). Its activity is regulated as follows. Inhibited by phosphorylation of Tyr-531 by leukocyte common antigen and activated by dephosphorylation of this site. Functionally, tyrosine-protein kinase implicated in the control of cell growth. Plays a role in the regulation of intracellular calcium levels. Required in brain development and mature brain function with important roles in the regulation of axon growth, axon guidance, and neurite extension. Blocks axon outgrowth and attraction induced by ntn1 by phosphorylating its receptor ddc. In Xenopus laevis (African clawed frog), this protein is Tyrosine-protein kinase Fyn (fyn).